Consider the following 387-residue polypeptide: GTPase Obg (387 aa).

In terms of domain architecture, Obg spans 1-159; it reads MKFLDEAKIY…MWVRLEMKLL (159 aa). The region spanning 160 to 334 is the OBG-type G domain; the sequence is ADVGLVGMPN…LVYHVGGMVK (175 aa). Residues 166 to 173, 191 to 195, 213 to 216, 283 to 286, and 315 to 317 contribute to the GTP site; these read GMPNAGKS, FTTLQ, DIPG, SKAD, and SSA. Residues serine 173 and threonine 193 each coordinate Mg(2+). The tract at residues 347-379 is disordered; the sequence is LEDAPTRAGSKALRDEHAPSWQDDDDDDDDDDG. Residues 368–379 show a composition bias toward acidic residues; it reads QDDDDDDDDDDG.

Belongs to the TRAFAC class OBG-HflX-like GTPase superfamily. OBG GTPase family. In terms of assembly, monomer. Mg(2+) serves as cofactor.

It localises to the cytoplasm. Its function is as follows. An essential GTPase which binds GTP, GDP and possibly (p)ppGpp with moderate affinity, with high nucleotide exchange rates and a fairly low GTP hydrolysis rate. Plays a role in control of the cell cycle, stress response, ribosome biogenesis and in those bacteria that undergo differentiation, in morphogenesis control. The polypeptide is GTPase Obg (Magnetococcus marinus (strain ATCC BAA-1437 / JCM 17883 / MC-1)).